The primary structure comprises 397 residues: Proteinase-activated receptor 2 (397 aa).

An N-terminal signal peptide occupies residues 1 to 25 (MRSPSAAWLLGAAILLAASLSCSGT). Positions 26 to 36 (IQGTNRSSKGR) are cleaved as a propeptide — removed for receptor activation. N-linked (GlcNAc...) asparagine glycosylation occurs at Asn30. At 37 to 71 (SLIGKVDGTSHVTGKGVTVETVFSVDEFSASVLTG) the chain is on the extracellular side. Residues 72–101 (KLTTVFLPIVYTIVFVVGLPSNGMALWVFL) form a helical membrane-spanning segment. The Cytoplasmic portion of the chain corresponds to 102-108 (FRTKKKH). A helical transmembrane segment spans residues 109–137 (PAVIYMANLALADLLSVIWFPLKIAYHIH). Topologically, residues 138–149 (GNNWIYGEALCN) are extracellular. Cys148 and Cys226 are joined by a disulfide. The helical transmembrane segment at 150-177 (VLIGFFYGNMYCSILFMTCLSVQRYWVI) threads the bilayer. The Cytoplasmic portion of the chain corresponds to 178-183 (VNPMGH). The chain crosses the membrane as a helical span at residues 184–211 (SRKKANIAIGISLAIWLLILLVTIPLYV). Residues 212-235 (VKQTIFIPALNITTCHDVLPEQLL) are Extracellular-facing. An N-linked (GlcNAc...) asparagine glycan is attached at Asn222. Residues 236–269 (VGDMFNYFLSLAIGVFLFPAFLTASAYVLMIRML) form a helical membrane-spanning segment. Topologically, residues 270–277 (RSSAMDEN) are cytoplasmic. The chain crosses the membrane as a helical span at residues 278–317 (SEKKRKRAIKLIVTVLAMYLICFTPSNLLLVVHYFLIKSQ). Topologically, residues 318-323 (GQSHVY) are extracellular. The helical transmembrane segment at 324–347 (ALYIVALCLSTLNSCIDPFVYYFV) threads the bilayer. The Cytoplasmic portion of the chain corresponds to 348-397 (SHDFRDHAKNALLCRSVRTVKQMQVSLTSKKHSRKSSSYSSSSTTVKTSY). A lipid anchor (S-palmitoyl cysteine) is attached at Cys361. Residues 373–397 (SLTSKKHSRKSSSYSSSSTTVKTSY) are disordered. Low complexity predominate over residues 383-397 (SSSYSSSSTTVKTSY).

Belongs to the G-protein coupled receptor 1 family. In terms of assembly, interacts with TLR4, COPS5 and TMED2. Interacts with GNAQ, GNA11, GNA12, GNA13 and GNA14. Post-translationally, a proteolytic cleavage generates a new N-terminus that functions as a tethered ligand. Activating serine proteases include trypsin, mast cell tryptase, coagulation factors VII and Xa, myeloblastin/PRTN3 and membrane-type serine protease 1/ST14. Subsequent cleavage by serine proteases, including neutrophil elastase and cathepsin G, leads to receptor deactivation. At least in part, implicated proteases are also shown to activate the receptor; the glycosylation status of the receptor is thought to contribute to the difference. In addition to conventional trypsin-like proteases activated by other proteases and glycosidases derived from bacteria, fungi and insects. Activated by serine protease allergens such as dust mite Der p3 and Der p9 and mold Pen c13. Activated by P.gingivalis arginine-specific (trypsin-like) cysteine proteinases called gingipains. Activated by S.griseus exogenous chitinase. Activated by A.alternata aspartate protease; the cleavage generates non-conventional processed forms. Proteolytically cleaved by coagulation factor Xa (F10); cleavage results in activation of F2RL1-dependent signaling. In terms of processing, N-glycosylated and sialylated. Multiple phosphorylated on serine and threonine residues in the cytoplasmic region upon receptor activation; required for receptor desensitization and recruitment of beta-arrestin. Post-translationally, monoubiquitinated by CBL at the plasma membrane and in early endosomes; not required for receptor endocytosis but for translocation to late endosomes or lysosomes. Deubiquitination involves STAMBP and USP8; required for lysosomal trafficking and receptor degradation. Widely expressed in tissues with especially high levels in pancreas, liver, kidney, small intestine, and colon. Moderate expression is detected in many organs, but none in brain or skeletal muscle. Expressed in endothelial cells.

It localises to the cell membrane. With respect to regulation, activated upon interaction by mucunain, a cowhage (Mucuna pruriens) plant cysteine proteinase. Functionally, receptor for trypsin and trypsin-like enzymes coupled to G proteins. Its function is mediated through the activation of several signaling pathways including phospholipase C (PLC), intracellular calcium, mitogen-activated protein kinase (MAPK), I-kappaB kinase/NF-kappaB and Rho. Can also be transactivated by cleaved F2R/PAR1. Involved in modulation of inflammatory responses and regulation of innate and adaptive immunity, and acts as a sensor for proteolytic enzymes generated during infection. Generally is promoting inflammation. Can signal synergistically with TLR4 and probably TLR2 in inflammatory responses and modulates TLR3 signaling. Has a protective role in establishing the endothelial barrier; the activity involves coagulation factor X. Regulates endothelial cell barrier integrity during neutrophil extravasation, probably following proteolytic cleavage by PRTN3. Proposed to have a bronchoprotective role in airway epithelium, but also shown to compromise the airway epithelial barrier by interrupting E-cadherin adhesion. Involved in the regulation of vascular tone; activation results in hypotension presumably mediated by vasodilation. Associates with a subset of G proteins alpha subunits such as GNAQ, GNA11, GNA14, GNA12 and GNA13, but probably not with G(o)-alpha, G(i) subunit alpha-1 and G(i) subunit alpha-2. However, according to PubMed:21627585 can signal through G(i) subunit alpha. Believed to be a class B receptor which internalizes as a complex with arrestin and traffic with it to endosomal vesicles, presumably as desensitized receptor, for extended periods of time. Mediates inhibition of TNF-alpha stimulated JNK phosphorylation via coupling to GNAQ and GNA11; the function involves dissociation of RIPK1 and TRADD from TNFR1. Mediates phosphorylation of nuclear factor NF-kappa-B RELA subunit at 'Ser-536'; the function involves IKBKB and is predominantly independent of G proteins. Involved in cellular migration. Involved in cytoskeletal rearrangement and chemotaxis through beta-arrestin-promoted scaffolds; the function is independent of GNAQ and GNA11 and involves promotion of cofilin dephosphorylation and actin filament severing. Induces redistribution of COPS5 from the plasma membrane to the cytosol and activation of the JNK cascade is mediated by COPS5. Involved in the recruitment of leukocytes to the sites of inflammation and is the major PAR receptor capable of modulating eosinophil function such as pro-inflammatory cytokine secretion, superoxide production and degranulation. During inflammation promotes dendritic cell maturation, trafficking to the lymph nodes and subsequent T-cell activation. Involved in antimicrobial response of innate immune cells; activation enhances phagocytosis of Gram-positive and killing of Gram-negative bacteria. Acts synergistically with interferon-gamma in enhancing antiviral responses. Implicated in a number of acute and chronic inflammatory diseases such as of the joints, lungs, brain, gastrointestinal tract, periodontium, skin, and vascular systems, and in autoimmune disorders. Probably mediates activation of pro-inflammatory and pro-fibrotic responses in fibroblasts, triggered by coagulation factor Xa (F10). Mediates activation of barrier protective signaling responses in endothelial cells, triggered by coagulation factor Xa (F10). The polypeptide is Proteinase-activated receptor 2 (F2RL1) (Homo sapiens (Human)).